An 801-amino-acid polypeptide reads, in one-letter code: Probable inorganic carbon transporter subunit DabA (801 aa).

Cys-330, Asp-332, His-489, and Cys-504 together coordinate Zn(2+).

The protein belongs to the inorganic carbon transporter (TC 9.A.2) DabA family. As to quaternary structure, forms a complex with DabB. It depends on Zn(2+) as a cofactor.

It is found in the cell inner membrane. Functionally, part of an energy-coupled inorganic carbon pump. The protein is Probable inorganic carbon transporter subunit DabA of Jannaschia sp. (strain CCS1).